The sequence spans 373 residues: Mannan endo-1,4-beta-mannosidase A (373 aa).

Residues 1-17 form the signal peptide; sequence MKGLFAFGLGLLSLVNA. Substrate is bound by residues tryptophan 81, asparagine 193, and 194–196; that span reads EPR. Glutamate 194 serves as the catalytic Proton donor/acceptor. Residues cysteine 197 and cysteine 200 are joined by a disulfide bond. Residues glutamate 230, tyrosine 267, and tryptophan 271 each coordinate substrate. Cysteine 289 and cysteine 296 are disulfide-bonded. Residue glutamate 300 is the Nucleophile of the active site. The cysteines at positions 308 and 359 are disulfide-linked. Position 332 (tryptophan 332) interacts with substrate.

Belongs to the glycosyl hydrolase 5 (cellulase A) family. Monomer. Not glycosylated.

The protein resides in the secreted. The catalysed reaction is Random hydrolysis of (1-&gt;4)-beta-D-mannosidic linkages in mannans, galactomannans and glucomannans.. Its function is as follows. Endo-1,4-mannanase that catalyzes the random hydrolysis of (1-&gt;4)-beta-D-mannosidic linkages in mannans and heteromannans. It is a crucial enzyme for depolymerization of seed galactomannans and wood galactoglucomannans. Hydrolyzes structurally different mannan polysaccharides, such as galactomannans, glucomannans, and beta-1,4-mannans from different sources, yielding principally mannobiose. Also has transglycosylation activity. The chain is Mannan endo-1,4-beta-mannosidase A from Podospora anserina (strain S / ATCC MYA-4624 / DSM 980 / FGSC 10383) (Pleurage anserina).